A 139-amino-acid chain; its full sequence is 10 kDa chaperonin 2, chloroplastic (139 aa).

The N-terminal 39 residues, 1-39 (MASTFVCSLPNPFFAFPVKATTPSTANHTLLGSRRGCLR), are a transit peptide targeting the chloroplast. Residues 51 to 138 (KVVPQADRVL…CKESDLLALV (88 aa)) are cpn-10 domain.

Belongs to the GroES chaperonin family. Expressed in leaves and stems. Expressed at low levels in germinating seeds, seedlings, rosettes leaves, flowers and siliques.

The protein resides in the plastid. It is found in the chloroplast stroma. Functions as a co-chaperone for protein folding in chloroplasts. The polypeptide is 10 kDa chaperonin 2, chloroplastic (Arabidopsis thaliana (Mouse-ear cress)).